The primary structure comprises 99 residues: MRVFTAILLILLVLLQYRLWFGKNSVPDYLVLKENVVRQQSANEKLQQRNKLLFADTDDLKLGLEAIEERARNELGMIKENETFFRLIPKENSTRNVNN.

Topologically, residues 1–3 (MRV) are cytoplasmic. A helical membrane pass occupies residues 4–21 (FTAILLILLVLLQYRLWF). Topologically, residues 22–99 (GKNSVPDYLV…KENSTRNVNN (78 aa)) are periplasmic. A coiled-coil region spans residues 29-53 (YLVLKENVVRQQSANEKLQQRNKLL).

It belongs to the FtsB family. Part of a complex composed of FtsB, FtsL and FtsQ.

The protein localises to the cell inner membrane. Its function is as follows. Essential cell division protein. May link together the upstream cell division proteins, which are predominantly cytoplasmic, with the downstream cell division proteins, which are predominantly periplasmic. This chain is Cell division protein FtsB, found in Colwellia psychrerythraea (strain 34H / ATCC BAA-681) (Vibrio psychroerythus).